The chain runs to 188 residues: Phosphatidylinositol N-acetylglucosaminyltransferase subunit H (188 aa).

It belongs to the PIGH family. In terms of assembly, component of the glycosylphosphatidylinositol-N-acetylglucosaminyltransferase (GPI-GnT) complex composed at least by PIGA, PIGC, PIGH, PIGP, PIGQ, PIGY and DPM2. Interacts with PIGQ.

The protein resides in the cytoplasm. The protein operates within glycolipid biosynthesis; glycosylphosphatidylinositol-anchor biosynthesis. Functionally, part of the glycosylphosphatidylinositol-N-acetylglucosaminyltransferase (GPI-GnT) complex that catalyzes the transfer of N-acetylglucosamine from UDP-N-acetylglucosamine to phosphatidylinositol and participates in the first step of GPI biosynthesis. The polypeptide is Phosphatidylinositol N-acetylglucosaminyltransferase subunit H (Homo sapiens (Human)).